The chain runs to 223 residues: uncharacterized protein (223 aa).

Positions 29-220 constitute a Tyr recombinase domain; it reads KQTYKMFKED…AKEILKNIGD (192 aa). Residues R71, K103, H170, R173, and H196 contribute to the active site. Y205 serves as the catalytic O-(3'-phospho-DNA)-tyrosine intermediate.

It belongs to the 'phage' integrase family.

This is an uncharacterized protein from Methanocaldococcus jannaschii (strain ATCC 43067 / DSM 2661 / JAL-1 / JCM 10045 / NBRC 100440) (Methanococcus jannaschii).